A 130-amino-acid chain; its full sequence is ATP synthase epsilon chain, chloroplastic (130 aa).

The protein belongs to the ATPase epsilon chain family. F-type ATPases have 2 components, CF(1) - the catalytic core - and CF(0) - the membrane proton channel. CF(1) has five subunits: alpha(3), beta(3), gamma(1), delta(1), epsilon(1). CF(0) has three main subunits: a, b and c.

It is found in the plastid. It localises to the chloroplast thylakoid membrane. In terms of biological role, produces ATP from ADP in the presence of a proton gradient across the membrane. This is ATP synthase epsilon chain, chloroplastic from Tupiella akineta (Green alga).